The primary structure comprises 326 residues: Tagatose 1,6-diphosphate aldolase (326 aa).

This sequence belongs to the aldolase LacD family.

It catalyses the reaction D-tagatofuranose 1,6-bisphosphate = D-glyceraldehyde 3-phosphate + dihydroxyacetone phosphate. It functions in the pathway carbohydrate metabolism; D-tagatose 6-phosphate degradation; D-glyceraldehyde 3-phosphate and glycerone phosphate from D-tagatose 6-phosphate: step 2/2. This chain is Tagatose 1,6-diphosphate aldolase, found in Streptococcus pneumoniae serotype 4 (strain ATCC BAA-334 / TIGR4).